Consider the following 298-residue polypeptide: ADP/ATP translocase 2 (298 aa).

Position 1 is an N-acetylmethionine (Met-1). Topologically, residues 1–7 (MTDAAVS) are mitochondrial intermembrane. N-acetylthreonine; in ADP/ATP translocase 2, N-terminally processed is present on Thr-2. The stretch at 6-98 (VSFAKDFLAG…FAFKDKYKQI (93 aa)) is one Solcar 1 repeat. Ser-7 carries the phosphoserine modification. A helical transmembrane segment spans residues 8-37 (FAKDFLAGGVAAAISKTAVAPIERVKLLLQ). N6-malonyllysine is present on Lys-23. Over 38-74 (VQHASKQITADKQYKGIMDCVVRIPKEQGVLSFWRGN) the chain is Mitochondrial matrix. Lys-43 carries the N6-succinyllysine modification. The residue at position 52 (Lys-52) is an N6,N6,N6-trimethyllysine; alternate. Lys-52 is modified (N6,N6-dimethyllysine; alternate). At Lys-52 the chain carries N6-methyllysine; alternate. A helical transmembrane segment spans residues 75–99 (LANVIRYFPTQALNFAFKDKYKQIF). 2 residues coordinate ADP: Arg-80 and Lys-92. N6-malonyllysine occurs at positions 92 and 96. Residues 100-109 (LGGVDKRTQF) are Mitochondrial intermembrane-facing. Lys-105 is subject to N6-acetyllysine; alternate. Lys-105 is subject to N6-succinyllysine; alternate. The chain crosses the membrane as a helical span at residues 110-130 (WRYFAGNLASGGAAGATSLCF). 2 Solcar repeats span residues 111 to 201 (RYFA…AKGM) and 212 to 297 (ISWM…IKKY). Over 131–178 (VYPLDFARTRLAADVGKAGDAREFKGLGDCLVKITKSDGIRGLYQGFN) the chain is Mitochondrial matrix. N6-methyllysine; alternate is present on Lys-147. Residues Lys-147 and Lys-155 each carry the N6-acetyllysine; alternate modification. Lys-147 and Lys-155 each carry N6-succinyllysine; alternate. Lys-147 carries the post-translational modification N6-malonyllysine; alternate. An N6-acetyllysine mark is found at Lys-163 and Lys-166. A helical membrane pass occupies residues 179–199 (VSVQGIIIYRAAYFGIYDTAK). The Mitochondrial intermembrane segment spans residues 200 to 210 (GMLPDPKNTHI). A helical transmembrane segment spans residues 211 to 231 (FISWMIAQSVTAVAGLTSYPF). The Mitochondrial matrix portion of the chain corresponds to 232–273 (DTVRRRMMMQSGRKGSDIMYTGTIDCWKKIARDEGSKAFFKG). Position 235 (Arg-235) interacts with ADP. Residues 235-240 (RRRMMM) form an important for transport activity region. The Nucleotide carrier signature motif motif lies at 235-240 (RRRMMM). Position 268 is an N6-acetyllysine; alternate (Lys-268). N6-succinyllysine; alternate is present on Lys-268. A helical membrane pass occupies residues 274–291 (AWSNVLRGMGGAFVLVLY). Topologically, residues 292–298 (DEIKKYT) are mitochondrial intermembrane.

The protein belongs to the mitochondrial carrier (TC 2.A.29) family. Monomer. Component of the MMXD complex, which includes CIAO1, ERCC2, CIAO2B, MMS19 and SLC25A5/ANT2. Interacts with AK4. Interacts with TIMM44; leading to inhibit the presequence translocase TIMM23, thereby promoting stabilization of PINK1. In terms of processing, trimethylated by ANTKMT at Lys-52.

Its subcellular location is the mitochondrion inner membrane. The protein localises to the membrane. It catalyses the reaction ADP(in) + ATP(out) = ADP(out) + ATP(in). The enzyme catalyses H(+)(in) = H(+)(out). With respect to regulation, the matrix-open state (m-state) is inhibited by the membrane-permeable bongkrekic acid (BKA). The cytoplasmic-open state (c-state) is inhibited by the membrane-impermeable toxic inhibitor carboxyatractyloside (CATR). Proton transporter activity is inhibited by ADP:ATP antiporter activity. Its function is as follows. ADP:ATP antiporter that mediates import of ADP into the mitochondrial matrix for ATP synthesis, and export of ATP out to fuel the cell. Cycles between the cytoplasmic-open state (c-state) and the matrix-open state (m-state): operates by the alternating access mechanism with a single substrate-binding site intermittently exposed to either the cytosolic (c-state) or matrix (m-state) side of the inner mitochondrial membrane. In addition to its ADP:ATP antiporter activity, also involved in mitochondrial uncoupling and mitochondrial permeability transition pore (mPTP) activity. Plays a role in mitochondrial uncoupling by acting as a proton transporter: proton transport uncouples the proton flows via the electron transport chain and ATP synthase to reduce the efficiency of ATP production and cause mitochondrial thermogenesis. Proton transporter activity is inhibited by ADP:ATP antiporter activity, suggesting that SLC25A5/ANT2 acts as a master regulator of mitochondrial energy output by maintaining a delicate balance between ATP production (ADP:ATP antiporter activity) and thermogenesis (proton transporter activity). Proton transporter activity requires free fatty acids as cofactor, but does not transport it. Probably mediates mitochondrial uncoupling in tissues that do not express UCP1. Also plays a key role in mPTP opening, a non-specific pore that enables free passage of the mitochondrial membranes to solutes of up to 1.5 kDa, and which contributes to cell death. It is however unclear if SLC25A5/ANT2 constitutes a pore-forming component of mPTP or regulates it. Acts as a regulator of mitophagy independently of ADP:ATP antiporter activity: promotes mitophagy via interaction with TIMM44, leading to inhibit the presequence translocase TIMM23, thereby promoting stabilization of PINK1. As part of the mitotic spindle-associated MMXD complex it may play a role in chromosome segregation. The chain is ADP/ATP translocase 2 from Tachyglossus aculeatus aculeatus (Southeast Australian short-beaked echidna).